Here is a 118-residue protein sequence, read N- to C-terminus: Small ribosomal subunit protein uS13 (118 aa).

A disordered region spans residues 97–118; it reads VRGQRTKTNARTCKGPRKAIKK.

Belongs to the universal ribosomal protein uS13 family. As to quaternary structure, part of the 30S ribosomal subunit. Forms a loose heterodimer with protein S19. Forms two bridges to the 50S subunit in the 70S ribosome.

Its function is as follows. Located at the top of the head of the 30S subunit, it contacts several helices of the 16S rRNA. In the 70S ribosome it contacts the 23S rRNA (bridge B1a) and protein L5 of the 50S subunit (bridge B1b), connecting the 2 subunits; these bridges are implicated in subunit movement. Contacts the tRNAs in the A and P-sites. This Buchnera aphidicola subsp. Schizaphis graminum (strain Sg) protein is Small ribosomal subunit protein uS13.